A 271-amino-acid chain; its full sequence is Aquaporin-2 (271 aa).

The Cytoplasmic portion of the chain corresponds to 1-11 (MWELRSIAFSR). A helical membrane pass occupies residues 12–32 (AVLAEFLATLLFVFFGLGSAL). Residues 33–40 (QWASSPPS) are Extracellular-facing. The helical transmembrane segment at 41–59 (VLQIAVAFGLGIGILVQAL) threads the bilayer. The Cytoplasmic segment spans residues 60 to 64 (GHVSG). Positions 65 to 74 (AHINPAVTVA) form an intramembrane region, discontinuously helical. Residues 68–70 (NPA) carry the NPA 1 motif. The Cytoplasmic portion of the chain corresponds to 75 to 85 (CLVGCHVSFLR). Residues 86 to 107 (AAFYVAAQLLGAVAGAAILHEI) traverse the membrane as a helical segment. Topologically, residues 108 to 127 (TPVEIRGDLAVNALHNNATA) are extracellular. Asn-124 carries an N-linked (GlcNAc...) asparagine glycan. The chain crosses the membrane as a helical span at residues 128-148 (GQAVTVELFLTMQLVLCIFAS). Residues 149–156 (TDERRGDN) lie on the Cytoplasmic side of the membrane. Residues 157–176 (LGSPALSIGFSVTLGHLLGI) form a helical membrane-spanning segment. Residues 177 to 180 (YFTG) are Extracellular-facing. The segment at residues 181–193 (CSMNPARSLAPAV) is an intramembrane region (discontinuously helical). The NPA 2 motif lies at 184–186 (NPA). Residues 194-201 (VTGKFDDH) are Extracellular-facing. A helical membrane pass occupies residues 202–222 (WVFWIGPLVGAIIGSLLYNYL). The Cytoplasmic portion of the chain corresponds to 223 to 271 (LFPSAKSLQERLAVLKGLEPDTDWEEREVRRRQSVELHSPQSLPRGSKA). A disordered region spans residues 251-271 (VRRRQSVELHSPQSLPRGSKA). Phosphoserine occurs at positions 256, 261, 264, and 269. Residues 261-271 (SPQSLPRGSKA) show a composition bias toward polar residues.

The protein belongs to the MIP/aquaporin (TC 1.A.8) family. As to quaternary structure, homotetramer. Ser-256 phosphorylation is necessary and sufficient for expression at the apical membrane. Endocytosis is not phosphorylation-dependent. In terms of processing, N-glycosylated. In terms of tissue distribution, detected in kidney, in cortical and the medullary collecting tubules (at protein level). Detected in kidney medulla and cortex.

Its subcellular location is the apical cell membrane. The protein localises to the basolateral cell membrane. It is found in the cell membrane. It localises to the cytoplasmic vesicle membrane. The protein resides in the golgi apparatus. Its subcellular location is the trans-Golgi network membrane. It carries out the reaction H2O(in) = H2O(out). It catalyses the reaction glycerol(in) = glycerol(out). Forms a water-specific channel that provides the plasma membranes of renal collecting duct with high permeability to water, thereby permitting water to move in the direction of an osmotic gradient. Plays an essential role in renal water homeostasis. Could also be permeable to glycerol. The sequence is that of Aquaporin-2 from Rattus norvegicus (Rat).